We begin with the raw amino-acid sequence, 301 residues long: MPELPEVETVKRGLAPAMEGARVAKLELRRGDLRFPFPDAFADRVSGRTIVSLGRRAKYLLVDLDDGNTLISHLGMSGSFRIEEGRIEEGAGAATPGEFHHARSKDEKHDHVVFHLESPAGPRRVVYNDPRRFGFMDMVGRADLAAHPFFRDLGPEPTGNELGAAYLAERFRHKAQPLKSALLDQKNIAGLGNIYVCEALWRAHLSPIRAAGTLATAGGRPKEQLNLLVASIRDVIADAITAGGSSLRDHIQTDGSLGYFQHSFSVYDREGQACRTPGCGGTVARIVQAGRSTFYCATCQK.

Proline 2 acts as the Schiff-base intermediate with DNA in catalysis. Glutamate 3 acts as the Proton donor in catalysis. The Proton donor; for beta-elimination activity role is filled by lysine 58. 3 residues coordinate DNA: histidine 109, arginine 131, and lysine 174. The FPG-type zinc finger occupies 265–301 (SVYDREGQACRTPGCGGTVARIVQAGRSTFYCATCQK). The Proton donor; for delta-elimination activity role is filled by arginine 291.

It belongs to the FPG family. In terms of assembly, monomer. The cofactor is Zn(2+).

It catalyses the reaction Hydrolysis of DNA containing ring-opened 7-methylguanine residues, releasing 2,6-diamino-4-hydroxy-5-(N-methyl)formamidopyrimidine.. It carries out the reaction 2'-deoxyribonucleotide-(2'-deoxyribose 5'-phosphate)-2'-deoxyribonucleotide-DNA = a 3'-end 2'-deoxyribonucleotide-(2,3-dehydro-2,3-deoxyribose 5'-phosphate)-DNA + a 5'-end 5'-phospho-2'-deoxyribonucleoside-DNA + H(+). Functionally, involved in base excision repair of DNA damaged by oxidation or by mutagenic agents. Acts as a DNA glycosylase that recognizes and removes damaged bases. Has a preference for oxidized purines, such as 7,8-dihydro-8-oxoguanine (8-oxoG). Has AP (apurinic/apyrimidinic) lyase activity and introduces nicks in the DNA strand. Cleaves the DNA backbone by beta-delta elimination to generate a single-strand break at the site of the removed base with both 3'- and 5'-phosphates. The protein is Formamidopyrimidine-DNA glycosylase of Rhizobium leguminosarum bv. trifolii (strain WSM2304).